The following is a 202-amino-acid chain: LexA repressor (202 aa).

The H-T-H motif DNA-binding region spans 28–48 (QQEIARAFGFRSLGTVRNYLV). Catalysis depends on for autocatalytic cleavage activity residues serine 120 and lysine 157.

Belongs to the peptidase S24 family. As to quaternary structure, homodimer.

The catalysed reaction is Hydrolysis of Ala-|-Gly bond in repressor LexA.. Represses a number of genes involved in the response to DNA damage (SOS response), including recA and lexA. In the presence of single-stranded DNA, RecA interacts with LexA causing an autocatalytic cleavage which disrupts the DNA-binding part of LexA, leading to derepression of the SOS regulon and eventually DNA repair. This is LexA repressor from Syntrophotalea carbinolica (strain DSM 2380 / NBRC 103641 / GraBd1) (Pelobacter carbinolicus).